We begin with the raw amino-acid sequence, 226 residues long: Ribonuclease 3 (226 aa).

One can recognise an RNase III domain in the interval 6 to 128; it reads MKKLQKFIGY…IIASIFLDSN (123 aa). Residue Glu41 coordinates Mg(2+). Residue Asp45 is part of the active site. Asn114 and Glu117 together coordinate Mg(2+). Residue Glu117 is part of the active site. Positions 155-225 constitute a DRBM domain; sequence DPKTRLQEYL…AQNALIRLEV (71 aa).

The protein belongs to the ribonuclease III family. As to quaternary structure, homodimer. Mg(2+) is required as a cofactor.

Its subcellular location is the cytoplasm. It catalyses the reaction Endonucleolytic cleavage to 5'-phosphomonoester.. In terms of biological role, digests double-stranded RNA. Involved in the processing of primary rRNA transcript to yield the immediate precursors to the large and small rRNAs (23S and 16S). Processes some mRNAs, and tRNAs when they are encoded in the rRNA operon. Processes pre-crRNA and tracrRNA of type II CRISPR loci if present in the organism. The polypeptide is Ribonuclease 3 (Buchnera aphidicola subsp. Cinara cedri (strain Cc)).